A 570-amino-acid chain; its full sequence is Zona pellucida sperm-binding protein 4 (570 aa).

Residues 1–19 form the signal peptide; the sequence is MWLLQPLLLCVPLSLAVHG. Residues 20–545 are Extracellular-facing; the sequence is QQKPQVPDYP…SSSPIDSQAL (526 aa). N-linked (GlcNAc...) asparagine glycosylation occurs at Asn68. One can recognise a P-type domain in the interval 177-218; the sequence is DLCDSVPKWDRLPCASSPITQGDCNKLGCCYKSEANSCYYGN. In terms of domain architecture, ZP spans 223–496; the sequence is RCTQDGHFSI…SSCRITCPVA (274 aa). N-linked (GlcNAc...) asparagine glycosylation is present at Asn237. The O-linked (GalNAc...) threonine glycan is linked to Thr337. Cys402 and Cys476 form a disulfide bridge. Residues Asn477 and Asn535 are each glycosylated (N-linked (GlcNAc...) asparagine). Residues 497-570 constitute a propeptide, removed in mature form; the sequence is RRRRHSDLHH…VSYLAIRKRR (74 aa). The chain crosses the membrane as a helical span at residues 546–566; that stretch reads WMAGLSGTLIFGFLLVSYLAI. The Cytoplasmic segment spans residues 567–570; it reads RKRR.

Belongs to the ZP domain family. ZPB subfamily. Proteolytically cleaved before the transmembrane segment to yield the secreted ectodomain incorporated in the zona pellucida. As to expression, expressed in oocytes.

It is found in the zona pellucida. The protein resides in the cell membrane. Functionally, component of the zona pellucida, an extracellular matrix surrounding oocytes which mediates sperm binding, induction of the acrosome reaction and prevents post-fertilization polyspermy. The zona pellucida is composed of 3 to 4 glycoproteins, ZP1, ZP2, ZP3, and ZP4. ZP4 may act as a sperm receptor. In Felis catus (Cat), this protein is Zona pellucida sperm-binding protein 4 (ZP4).